Consider the following 173-residue polypeptide: Mesogenin-1 (173 aa).

Polar residues predominate over residues 39–68; that stretch reads ESYSLSQTPSPQSVSPAASYESTYSSSPHT. Disordered stretches follow at residues 39 to 69 and 96 to 117; these read ESYSLSQTPSPQSVSPAASYESTYSSSPHTG and TKKDHGHKTSMTTHRRRKASER. Positions 99–114 are enriched in basic residues; the sequence is DHGHKTSMTTHRRRKA. Positions 109 to 163 constitute a bHLH domain; the sequence is HRRRKASEREKLRMRAIAEALHTLRNNLPPMYSQGRQPLTKIQTLKCTINYISEL.

It is found in the nucleus. In terms of biological role, involved in specifying the paraxial, but not dorsal, mesoderm. May regulate the expression of T-box transcription factors required for mesoderm formation and differentiation, such as brachyury T, wnt8, vegt and eomes. The polypeptide is Mesogenin-1 (msgn1) (Xenopus laevis (African clawed frog)).